The primary structure comprises 341 residues: Glycerol-3-phosphate dehydrogenase [NAD(P)+] (341 aa).

Residues Ser15, Trp16, Arg36, and Lys110 each contribute to the NADPH site. The sn-glycerol 3-phosphate site is built by Lys110, Gly139, and Ser141. An NADPH-binding site is contributed by Ala143. 5 residues coordinate sn-glycerol 3-phosphate: Lys194, Asp247, Ser257, Arg258, and Asn259. Lys194 serves as the catalytic Proton acceptor. Arg258 is an NADPH binding site. Residues Val282 and Glu284 each coordinate NADPH.

It belongs to the NAD-dependent glycerol-3-phosphate dehydrogenase family.

It is found in the cytoplasm. It catalyses the reaction sn-glycerol 3-phosphate + NAD(+) = dihydroxyacetone phosphate + NADH + H(+). The catalysed reaction is sn-glycerol 3-phosphate + NADP(+) = dihydroxyacetone phosphate + NADPH + H(+). Its pathway is membrane lipid metabolism; glycerophospholipid metabolism. Functionally, catalyzes the reduction of the glycolytic intermediate dihydroxyacetone phosphate (DHAP) to sn-glycerol 3-phosphate (G3P), the key precursor for phospholipid synthesis. The chain is Glycerol-3-phosphate dehydrogenase [NAD(P)+] from Xanthomonas oryzae pv. oryzae (strain MAFF 311018).